Consider the following 301-residue polypeptide: MTEDELNKLLLAGKIAAKARDEVSLDVKASAKVLDICEEVESIIIENKAFPSFPCNISINSEAAHYSPTINDEKRIPEGAVVKLDLGAHIDGFISDTAITISLDSRYQRLLDASKTALEAAITNFKAGLSIGEIGRVIEKVIRAQGYKPIRNLGGHLIRRYELHAGVFIPNVYERGLGVIQSDSVYAIEPFATDGGGEVVEGKSITIYSLKNPNIKGLSSRENELIDFIYTRFNYLPFSERWLKEFSTNVDELRNNIKNLVKKGALRGYPILIEIKKGVVSQFEHTVIVKGDSIIVSTKSL.

H65 contributes to the substrate binding site. Residues D85, D96, and H156 each coordinate a divalent metal cation. H164 lines the substrate pocket. A divalent metal cation-binding residues include E189 and E284.

Belongs to the peptidase M24A family. Methionine aminopeptidase archaeal type 2 subfamily. In terms of assembly, monomer. Requires Co(2+) as cofactor. It depends on Zn(2+) as a cofactor. Mn(2+) serves as cofactor. Fe(2+) is required as a cofactor.

The enzyme catalyses Release of N-terminal amino acids, preferentially methionine, from peptides and arylamides.. In terms of biological role, removes the N-terminal methionine from nascent proteins. The N-terminal methionine is often cleaved when the second residue in the primary sequence is small and uncharged (Met-Ala-, Cys, Gly, Pro, Ser, Thr, or Val). This chain is Methionine aminopeptidase, found in Saccharolobus solfataricus (strain ATCC 35092 / DSM 1617 / JCM 11322 / P2) (Sulfolobus solfataricus).